We begin with the raw amino-acid sequence, 72 residues long: uncharacterized protein (72 aa).

This is an uncharacterized protein from Bacillus subtilis (strain 168).